Here is a 312-residue protein sequence, read N- to C-terminus: Olfactory receptor 1493 (312 aa).

Topologically, residues 1-23 (MNNKTVITHFLLLGLPIPPEHQQ) are extracellular. Asparagine 3 is a glycosylation site (N-linked (GlcNAc...) asparagine). The helical transmembrane segment at 24–48 (LFFALFLIMYLTTFLGNLLIVVLVQ) threads the bilayer. At 49-55 (LDSHLHT) the chain is on the cytoplasmic side. Residues 56–77 (PMYLFLSNLSFSDLCFSSVTML) traverse the membrane as a helical segment. The Extracellular portion of the chain corresponds to 78–98 (KLLQNIQSQVPSISYAGCLTQ). Cysteines 95 and 187 form a disulfide. Residues 99–118 (IFFFLLFGYLGNFLLVAMAY) traverse the membrane as a helical segment. Over 119–137 (DRYVAICFPLHYTNIMSHK) the chain is Cytoplasmic. Residues 138 to 156 (LCTCLLLVFWIMTSSHAMM) form a helical membrane-spanning segment. The Extracellular segment spans residues 157 to 194 (HTLLAARLSFCENNVLLNFFCDLFVLLKLACSDTYVNE). The helical transmembrane segment at 195–217 (LMIHIMGVIIIVIPFVLIVISYA) threads the bilayer. Over 218-234 (KIISSILKVPSTQSIHK) the chain is Cytoplasmic. The helical transmembrane segment at 235–258 (VFSTCGSHLSVVSLFYGTIIGLYL) threads the bilayer. The Extracellular portion of the chain corresponds to 259–270 (CPSGDNFSLKGS). The helical transmembrane segment at 271 to 290 (AMAMMYTVVTPMLNPFIYSL) threads the bilayer. Residues 291–312 (RNRDMKQALIRVTCSKKISLPW) lie on the Cytoplasmic side of the membrane.

Belongs to the G-protein coupled receptor 1 family. In terms of tissue distribution, olfactory epithelium.

The protein resides in the cell membrane. In terms of biological role, odorant receptor. The sequence is that of Olfactory receptor 1493 (Olr1493) from Rattus norvegicus (Rat).